Reading from the N-terminus, the 213-residue chain is Protein-L-isoaspartate O-methyltransferase (213 aa).

The active site involves serine 64.

It belongs to the methyltransferase superfamily. L-isoaspartyl/D-aspartyl protein methyltransferase family.

The protein localises to the cytoplasm. The enzyme catalyses [protein]-L-isoaspartate + S-adenosyl-L-methionine = [protein]-L-isoaspartate alpha-methyl ester + S-adenosyl-L-homocysteine. Its function is as follows. Catalyzes the methyl esterification of L-isoaspartyl residues in peptides and proteins that result from spontaneous decomposition of normal L-aspartyl and L-asparaginyl residues. It plays a role in the repair and/or degradation of damaged proteins. The sequence is that of Protein-L-isoaspartate O-methyltransferase from Christiangramia forsetii (strain DSM 17595 / CGMCC 1.15422 / KT0803) (Gramella forsetii).